A 357-amino-acid polypeptide reads, in one-letter code: Membrane-bound lytic murein transglycosylase C (357 aa).

Positions 1–17 (MKLKKFLVLLLIPFLYA) are cleaved as a signal peptide. Cys-18 is lipidated: N-palmitoyl cysteine. Cys-18 carries the S-diacylglycerol cysteine lipid modification.

This sequence belongs to the transglycosylase Slt family.

The protein localises to the cell outer membrane. The enzyme catalyses Exolytic cleavage of the (1-&gt;4)-beta-glycosidic linkage between N-acetylmuramic acid (MurNAc) and N-acetylglucosamine (GlcNAc) residues in peptidoglycan, from either the reducing or the non-reducing ends of the peptidoglycan chains, with concomitant formation of a 1,6-anhydrobond in the MurNAc residue.. Functionally, murein-degrading enzyme. May play a role in recycling of muropeptides during cell elongation and/or cell division. This chain is Membrane-bound lytic murein transglycosylase C, found in Mannheimia succiniciproducens (strain KCTC 0769BP / MBEL55E).